A 443-amino-acid polypeptide reads, in one-letter code: MKVLLIGGGAREHAIAMALKKNRSVELYTLMKNKNPGIYGLSKEVSFNNETDIDKIKEFAEKIRPELAIIGPEAPLGVGAADLLTEMGIPTVGPKKLPAQIETSKEFMRNLFKKYNIKGSLKYAAFNEYGENLEKFIDEMTGLGKDVVVKPAGLTGGKGVKVVGEQLKNNDDAKLYAKEVFEKSIGGGKIIVEEKLVGVEFTLHGFVDGENIVFMPAVQDHPHAYNNDEGPITGGMGSYSCSNHKLPFLPDDKLDEAKEIMKETVNAIKAEVGPYNGFLYGQFMLTKDGPKIIEYNARFGDPEAMNLLPILKTDFLDVCFGISNGNLDNINIEFENKATVCKYVVPNGYPICPVKNKEILVNSNEIEKAGAILFYASVNEENGKLVITGSRSAAVTGISERIEDAEKIAQDAIINFEGEIFFRSDIGTKKLIEKRIERMKELI.

The ATP-grasp domain occupies arginine 109–asparagine 324. Position 140 to 202 (methionine 140 to threonine 202) interacts with ATP. Mg(2+) contacts are provided by glutamine 282, glutamate 294, and asparagine 296. Residues glutamine 282, glutamate 294, and asparagine 296 each contribute to the Mn(2+) site.

This sequence belongs to the GARS family. It depends on Mg(2+) as a cofactor. Requires Mn(2+) as cofactor.

It carries out the reaction 5-phospho-beta-D-ribosylamine + glycine + ATP = N(1)-(5-phospho-beta-D-ribosyl)glycinamide + ADP + phosphate + H(+). Its pathway is purine metabolism; IMP biosynthesis via de novo pathway; N(1)-(5-phospho-D-ribosyl)glycinamide from 5-phospho-alpha-D-ribose 1-diphosphate: step 2/2. The chain is Phosphoribosylamine--glycine ligase from Methanococcus vannielii (strain ATCC 35089 / DSM 1224 / JCM 13029 / OCM 148 / SB).